The primary structure comprises 165 residues: Large ribosomal subunit protein mL49 (165 aa).

The segment covering 42 to 75 (TTATTTTPLQQQQQQQPTTQPTTPIQTQTGAAPT) has biased composition (low complexity). The segment at 42–81 (TTATTTTPLQQQQQQQPTTQPTTPIQTQTGAAPTESTKPV) is disordered.

This sequence belongs to the mitochondrion-specific ribosomal protein mL49 family. Component of the mitochondrial large ribosomal subunit (mt-LSU). Mature N.crassa 74S mitochondrial ribosomes consist of a small (37S) and a large (54S) subunit. The 37S small subunit contains a 16S ribosomal RNA (16S mt-rRNA) and 32 different proteins. The 54S large subunit contains a 23S rRNA (23S mt-rRNA) and 42 different proteins.

The protein resides in the mitochondrion. Its function is as follows. Component of the mitochondrial ribosome (mitoribosome), a dedicated translation machinery responsible for the synthesis of mitochondrial genome-encoded proteins, including at least some of the essential transmembrane subunits of the mitochondrial respiratory chain. The mitoribosomes are attached to the mitochondrial inner membrane and translation products are cotranslationally integrated into the membrane. This chain is Large ribosomal subunit protein mL49 (img2), found in Neurospora crassa (strain ATCC 24698 / 74-OR23-1A / CBS 708.71 / DSM 1257 / FGSC 987).